Consider the following 393-residue polypeptide: uncharacterized protein (393 aa).

Positions 250–389 (AVIVYDTMYN…KCYEFGKRLA (140 aa)) constitute a Flavodoxin-like domain.

This is an uncharacterized protein from Methanocaldococcus jannaschii (strain ATCC 43067 / DSM 2661 / JAL-1 / JCM 10045 / NBRC 100440) (Methanococcus jannaschii).